The sequence spans 50 residues: uncharacterized protein (50 aa).

This is an uncharacterized protein from Rickettsia prowazekii (strain Madrid E).